We begin with the raw amino-acid sequence, 540 residues long: IQ motif and ankyrin repeat domain-containing protein 1 (540 aa).

Over residues M1 to A17 the composition is skewed to low complexity. Residues M1–E62 are disordered. The IQ domain occupies E62 to E91. ANK repeat units lie at residues H191–T220 and F224–M253. A coiled-coil region spans residues L281 to E388.

The protein is IQ motif and ankyrin repeat domain-containing protein 1 of Mus musculus (Mouse).